Consider the following 115-residue polypeptide: UPF0738 protein SH1953 (115 aa).

The protein belongs to the UPF0738 family.

The protein is UPF0738 protein SH1953 of Staphylococcus haemolyticus (strain JCSC1435).